A 236-amino-acid chain; its full sequence is Purine nucleoside phosphorylase DeoD-type 2 (236 aa).

A purine D-ribonucleoside is bound at residue His-5. Residues Gly-21, Arg-25, Arg-44, and 88–91 contribute to the phosphate site; that span reads RVGS. A purine D-ribonucleoside-binding positions include 180-182 and 204-205; these read DME and SD. The Proton donor role is filled by Asp-205.

It belongs to the PNP/UDP phosphorylase family. In terms of assembly, homohexamer; trimer of homodimers.

The catalysed reaction is a purine D-ribonucleoside + phosphate = a purine nucleobase + alpha-D-ribose 1-phosphate. It catalyses the reaction a purine 2'-deoxy-D-ribonucleoside + phosphate = a purine nucleobase + 2-deoxy-alpha-D-ribose 1-phosphate. Functionally, catalyzes the reversible phosphorolytic breakdown of the N-glycosidic bond in the beta-(deoxy)ribonucleoside molecules, with the formation of the corresponding free purine bases and pentose-1-phosphate. The sequence is that of Purine nucleoside phosphorylase DeoD-type 2 from Aliivibrio fischeri (strain ATCC 700601 / ES114) (Vibrio fischeri).